We begin with the raw amino-acid sequence, 646 residues long: MTDNANSQLVVRAKFNFQQTNEDELSFSKGDVIHVTRVEEGGWWEGTHNGRTGWFPSNYVREIKPSEKPVSPKSGTLKSPPKGFDTTAINKSYYNVVLQNILETEHEYSKELQSVLSTYLWPLQTSEKLSSANTSYLMGNLEEISSFQQVLVQSLEECTKSPEAQQRVGGCFLSLMPQMRTLYLAYCANHPSAVSVLTEHSEDLGEFMETKGASSPGILVLTTGLSKPFMRLDKYPTLLKELERHMEDYHPDRQDIQKSMTAFKNLSAQCQEVRKRKELELQILTEPIRSWEGDDIKTLGSVTYMSQVTIQCAGSEEKNERYLLLFPNLLLMLSASPRMSGFIYQGKLPTTGMTITKLEDSENHRNAFEISGSMIERILVSCNNQQDLHEWVEHLQRQTKVTSVSNPTIKPHSVPSHTLPSHPLTPSSKHADSKPVALTPAYHTLPHPSHHGTPHTTISWGPLEPPKTPKPWSLSCLRPAPPLRPSAALCYKEDLSRSPKTMKKLLPKRKPERKPSDEEFAVRKSTAALEEDAQILKVIEAYCTSAKTRQTLNSSSRKESAPQVLLPEEEKIIVEETKSNGQTVIEEKSLVDTVYALKDEVQELRQDNKKMKKSLEEEQRARKDLEKLVRKVLKNMNDPAWDETNL.

Positions 6-65 (NSQLVVRAKFNFQQTNEDELSFSKGDVIHVTRVEEGGWWEGTHNGRTGWFPSNYVREIKP) constitute an SH3 domain. Phosphoserine occurs at positions 7, 71, and 79. One can recognise a DH domain in the interval 93-273 (YYNVVLQNIL…KNLSAQCQEV (181 aa)). One can recognise a PH domain in the interval 295–400 (DIKTLGSVTY…WVEHLQRQTK (106 aa)). S340 is subject to Phosphoserine. 2 disordered regions span residues 402–464 (TSVS…GPLE) and 500–520 (KTMK…DEEF). Polar residues predominate over residues 415–428 (PSHTLPSHPLTPSS). The span at 500–512 (KTMKKLLPKRKPE) shows a compositional bias: basic residues. Residues S516 and S560 each carry the phosphoserine modification.

In terms of assembly, interacts with SCRIB; interaction is direct and may play a role in regulation of apoptosis. Interacts with PAK kinases through the SH3 domain. Interacts with GIT1 and probably TGFB1I1. Interacts with ITCH and PARVB. Interacts with FRMPD4 (via N-terminus). Interacts with CaMK1. Interacts with PTK2/FAK1 and RAC1. Interacts with BIN2. Interacts with YWHAZ. Interacts (via PH domain) with NOX1 (via FAD-binding FR-type domain). In terms of processing, phosphorylated on Ser-516 by CaMK1; enhancement of GEF activity and downstream activation of RAC1. Phosphorylated by PTK2/FAK1; this promotes interaction with RAC1.

It is found in the cell junction. The protein resides in the focal adhesion. The protein localises to the cell projection. Its subcellular location is the ruffle. It localises to the cytoplasm. It is found in the cell cortex. The protein resides in the lamellipodium. Acts as a RAC1 guanine nucleotide exchange factor (GEF) and can induce membrane ruffling. Functions in cell migration, attachment and cell spreading. Promotes targeting of RAC1 to focal adhesions. May function as a positive regulator of apoptosis. Downstream of NMDA receptors and CaMKK-CaMK1 signaling cascade, promotes the formation of spines and synapses in hippocampal neurons. In Rattus norvegicus (Rat), this protein is Rho guanine nucleotide exchange factor 7 (Arhgef7).